Here is a 231-residue protein sequence, read N- to C-terminus: Urease accessory protein UreE (231 aa).

The disordered stretch occupies residues 185–231; the sequence is VASPLDEPHGSGLHIHGIHSHGEGHSHGDHDHDHSHSHGDHDHDHKH. The segment covering 204–231 has biased composition (basic and acidic residues); sequence SHGEGHSHGDHDHDHSHSHGDHDHDHKH.

This sequence belongs to the UreE family.

Its subcellular location is the cytoplasm. In terms of biological role, involved in urease metallocenter assembly. Binds nickel. Probably functions as a nickel donor during metallocenter assembly. The sequence is that of Urease accessory protein UreE from Yersinia pseudotuberculosis serotype O:1b (strain IP 31758).